The primary structure comprises 306 residues: D-alanine--D-alanine ligase B (306 aa).

Residues Glu-15 and Ser-150 contribute to the active site. An ATP-grasp domain is found at 101–303; that stretch reads KLLWQGAGLP…FSQLVVRILE (203 aa). ATP is bound at residue 134–189; it reads ISALGLPVIVKPSREGSSVGMSKVVAENALQDALRLAFQHDEEVLIEKWLSGPEFT. Residues Asp-257, Glu-270, and Asn-272 each contribute to the Mg(2+) site. The active site involves Ser-281.

Belongs to the D-alanine--D-alanine ligase family. Monomer. It depends on Mg(2+) as a cofactor. The cofactor is Mn(2+).

It localises to the cytoplasm. It carries out the reaction 2 D-alanine + ATP = D-alanyl-D-alanine + ADP + phosphate + H(+). The protein operates within cell wall biogenesis; peptidoglycan biosynthesis. In terms of biological role, cell wall formation. The sequence is that of D-alanine--D-alanine ligase B (ddlB) from Escherichia coli (strain K12).